A 319-amino-acid chain; its full sequence is Ribose-phosphate pyrophosphokinase (319 aa).

ATP is bound by residues Asn-41–Glu-43 and Arg-100–Gln-101. Residues His-134 and Asp-175 each contribute to the Mg(2+) site. Lys-198 is a catalytic residue. D-ribose 5-phosphate-binding positions include Arg-200, Asp-224, and Asp-228–Ser-232.

The protein belongs to the ribose-phosphate pyrophosphokinase family. Class I subfamily. Homohexamer. The cofactor is Mg(2+).

The protein resides in the cytoplasm. It carries out the reaction D-ribose 5-phosphate + ATP = 5-phospho-alpha-D-ribose 1-diphosphate + AMP + H(+). It participates in metabolic intermediate biosynthesis; 5-phospho-alpha-D-ribose 1-diphosphate biosynthesis; 5-phospho-alpha-D-ribose 1-diphosphate from D-ribose 5-phosphate (route I): step 1/1. Involved in the biosynthesis of the central metabolite phospho-alpha-D-ribosyl-1-pyrophosphate (PRPP) via the transfer of pyrophosphoryl group from ATP to 1-hydroxyl of ribose-5-phosphate (Rib-5-P). The chain is Ribose-phosphate pyrophosphokinase from Clostridium acetobutylicum (strain ATCC 824 / DSM 792 / JCM 1419 / IAM 19013 / LMG 5710 / NBRC 13948 / NRRL B-527 / VKM B-1787 / 2291 / W).